The sequence spans 413 residues: S-adenosylmethionine synthase (413 aa).

His15 lines the ATP pocket. Mg(2+) is bound at residue Asp17. A K(+)-binding site is contributed by Glu43. Residues Glu56 and Gln100 each contribute to the L-methionine site. A flexible loop region spans residues Gln100–Asp110. ATP contacts are provided by residues Asp171 to Lys173, Lys248 to Phe249, Asp257, Arg263 to Lys264, Ala280, and Lys284. Asp257 is a binding site for L-methionine. Lys288 serves as a coordination point for L-methionine.

The protein belongs to the AdoMet synthase family. Homotetramer; dimer of dimers. It depends on Mg(2+) as a cofactor. K(+) serves as cofactor.

It is found in the cytoplasm. It carries out the reaction L-methionine + ATP + H2O = S-adenosyl-L-methionine + phosphate + diphosphate. It participates in amino-acid biosynthesis; S-adenosyl-L-methionine biosynthesis; S-adenosyl-L-methionine from L-methionine: step 1/1. Its function is as follows. Catalyzes the formation of S-adenosylmethionine (AdoMet) from methionine and ATP. The overall synthetic reaction is composed of two sequential steps, AdoMet formation and the subsequent tripolyphosphate hydrolysis which occurs prior to release of AdoMet from the enzyme. The polypeptide is S-adenosylmethionine synthase (Prochlorococcus marinus (strain MIT 9301)).